Reading from the N-terminus, the 124-residue chain is MISSLLQVALGGALGASARYLTNVGSMRLFGPAFPVGTMIVNVVGSFLMGVLVVVLAHKGNRYAPFLMTGMLGGFTTFSAFSLDAVTLYERGQAGLAAAYVGLSVGLSLAGLMAGMAAVRGWMA.

Helical transmembrane passes span 36-56 (VGTMIVNVVGSFLMGVLVVVL), 63-83 (YAPFLMTGMLGGFTTFSAFSL), and 99-119 (AYVGLSVGLSLAGLMAGMAAV). Na(+) contacts are provided by glycine 73 and threonine 76.

This sequence belongs to the fluoride channel Fluc/FEX (TC 1.A.43) family.

Its subcellular location is the cell inner membrane. The enzyme catalyses fluoride(in) = fluoride(out). With respect to regulation, na(+) is not transported, but it plays an essential structural role and its presence is essential for fluoride channel function. Fluoride-specific ion channel. Important for reducing fluoride concentration in the cell, thus reducing its toxicity. The sequence is that of Fluoride-specific ion channel FluC from Cereibacter sphaeroides (strain ATCC 17029 / ATH 2.4.9) (Rhodobacter sphaeroides).